The chain runs to 435 residues: Transcription factor gkaF (435 aa).

The span at 1 to 19 (MGRPQRGDTAKERRERQDK) shows a compositional bias: basic and acidic residues. 3 disordered regions span residues 1–40 (MGRP…TVDW), 115–158 (STTA…SSQS), and 231–257 (FSSE…FLAP). The span at 28–40 (PISQSGLSDTVDW) shows a compositional bias: polar residues. Positions 143 to 158 (SQSSDSSKPSSTSSQS) are enriched in low complexity.

The protein localises to the nucleus. Functionally, transcription factor; part of the gene cluster that mediates the biosynthesis of GKK1032, fungal natural products containing a macrocyclic para-cyclophane connected to a decahydrofluorene ring system that show potent antitumor activities. The chain is Transcription factor gkaF from Penicillium citrinum.